Consider the following 535-residue polypeptide: 2-isopropylmalate synthase (535 aa).

The 262-residue stretch at 13 to 274 folds into the Pyruvate carboxyltransferase domain; it reads VLIFDTTLRD…YFNPFLGRPP (262 aa). The Mn(2+) site is built by D22, H213, H215, and N249. The tract at residues 414–535 is regulatory domain; it reads QLEFVQVSCG…LEQRALHPQA (122 aa).

The protein belongs to the alpha-IPM synthase/homocitrate synthase family. LeuA type 1 subfamily. As to quaternary structure, homodimer. The cofactor is Mn(2+).

Its subcellular location is the cytoplasm. The enzyme catalyses 3-methyl-2-oxobutanoate + acetyl-CoA + H2O = (2S)-2-isopropylmalate + CoA + H(+). It participates in amino-acid biosynthesis; L-leucine biosynthesis; L-leucine from 3-methyl-2-oxobutanoate: step 1/4. Its function is as follows. Catalyzes the condensation of the acetyl group of acetyl-CoA with 3-methyl-2-oxobutanoate (2-ketoisovalerate) to form 3-carboxy-3-hydroxy-4-methylpentanoate (2-isopropylmalate). This is 2-isopropylmalate synthase from Thermosynechococcus vestitus (strain NIES-2133 / IAM M-273 / BP-1).